The chain runs to 391 residues: Chorismate synthase (391 aa).

R48 lines the NADP(+) pocket. FMN contacts are provided by residues 126 to 128, G287, 302 to 306, and R329; these read RSS and KPTSS.

Belongs to the chorismate synthase family. FMNH2 serves as cofactor.

It carries out the reaction 5-O-(1-carboxyvinyl)-3-phosphoshikimate = chorismate + phosphate. It participates in metabolic intermediate biosynthesis; chorismate biosynthesis; chorismate from D-erythrose 4-phosphate and phosphoenolpyruvate: step 7/7. Its function is as follows. Catalyzes the anti-1,4-elimination of the C-3 phosphate and the C-6 proR hydrogen from 5-enolpyruvylshikimate-3-phosphate (EPSP) to yield chorismate, which is the branch point compound that serves as the starting substrate for the three terminal pathways of aromatic amino acid biosynthesis. This reaction introduces a second double bond into the aromatic ring system. The polypeptide is Chorismate synthase (Sulfolobus acidocaldarius (strain ATCC 33909 / DSM 639 / JCM 8929 / NBRC 15157 / NCIMB 11770)).